Consider the following 181-residue polypeptide: Adenine phosphoribosyltransferase (181 aa).

The protein belongs to the purine/pyrimidine phosphoribosyltransferase family. In terms of assembly, homodimer.

It is found in the cytoplasm. The enzyme catalyses AMP + diphosphate = 5-phospho-alpha-D-ribose 1-diphosphate + adenine. It functions in the pathway purine metabolism; AMP biosynthesis via salvage pathway; AMP from adenine: step 1/1. Catalyzes a salvage reaction resulting in the formation of AMP, that is energically less costly than de novo synthesis. The chain is Adenine phosphoribosyltransferase from Rhizobium leguminosarum bv. trifolii (strain WSM2304).